A 156-amino-acid chain; its full sequence is FUN14 domain-containing protein 1 (156 aa).

Positions 19–22 (YEVL) match the YXXL motif. 3 helical membrane passes run 49 to 69 (YSVA…GFLF), 76 to 96 (AATA…SGYV), and 135 to 155 (FIKQ…LGLA).

Belongs to the FUN14 family.

The protein resides in the mitochondrion outer membrane. Its function is as follows. Acts as an activator of hypoxia-induced mitophagy, an important mechanism for mitochondrial quality control. The polypeptide is FUN14 domain-containing protein 1 (FUNDC1) (Gallus gallus (Chicken)).